Reading from the N-terminus, the 424-residue chain is D-inositol 3-phosphate glycosyltransferase (424 aa).

Residue His-16 coordinates 1D-myo-inositol 3-phosphate. UDP-N-acetyl-alpha-D-glucosamine-binding positions include Gln-22 to Pro-23 and Gly-30. Residues Asp-27–Asn-32, Lys-85, Tyr-118, Thr-142, and Arg-162 each bind 1D-myo-inositol 3-phosphate. The UDP-N-acetyl-alpha-D-glucosamine site is built by Arg-240 and Lys-245. Met-313, Arg-314, and Ala-316 together coordinate Mg(2+). Residues Glu-326 and Glu-334 each coordinate UDP-N-acetyl-alpha-D-glucosamine. Thr-340 is a Mg(2+) binding site.

This sequence belongs to the glycosyltransferase group 1 family. MshA subfamily. Homodimer.

It carries out the reaction 1D-myo-inositol 3-phosphate + UDP-N-acetyl-alpha-D-glucosamine = 1D-myo-inositol 2-acetamido-2-deoxy-alpha-D-glucopyranoside 3-phosphate + UDP + H(+). Its function is as follows. Catalyzes the transfer of a N-acetyl-glucosamine moiety to 1D-myo-inositol 3-phosphate to produce 1D-myo-inositol 2-acetamido-2-deoxy-glucopyranoside 3-phosphate in the mycothiol biosynthesis pathway. The sequence is that of D-inositol 3-phosphate glycosyltransferase from Jonesia denitrificans (strain ATCC 14870 / DSM 20603 / BCRC 15368 / CIP 55.134 / JCM 11481 / NBRC 15587 / NCTC 10816 / Prevot 55134) (Listeria denitrificans).